Reading from the N-terminus, the 490-residue chain is Cytochrome P450 2C25 (490 aa).

Residue cysteine 435 coordinates heme.

It belongs to the cytochrome P450 family. It depends on heme as a cofactor.

The protein localises to the endoplasmic reticulum membrane. The protein resides in the microsome membrane. It catalyses the reaction an organic molecule + reduced [NADPH--hemoprotein reductase] + O2 = an alcohol + oxidized [NADPH--hemoprotein reductase] + H2O + H(+). Functionally, catalyzes the hydroxylation of tolbutamide and the N-demethylation of aminopyrine and benzphetamine. Also has testosterone hydroxylase (16 beta) activity. This Mesocricetus auratus (Golden hamster) protein is Cytochrome P450 2C25 (CYP2C25).